The chain runs to 140 residues: Anti-sigma F factor (140 aa).

This sequence belongs to the anti-sigma-factor family.

The enzyme catalyses L-seryl-[protein] + ATP = O-phospho-L-seryl-[protein] + ADP + H(+). It catalyses the reaction L-threonyl-[protein] + ATP = O-phospho-L-threonyl-[protein] + ADP + H(+). Functionally, binds to sigma F and blocks its ability to form an RNA polymerase holoenzyme (E-sigma F). Phosphorylates SpoIIAA on a serine residue. This phosphorylation may enable SpoIIAA to act as an anti-anti-sigma factor that counteracts SpoIIAB and thus releases sigma F from inhibition. In Clostridium perfringens (strain SM101 / Type A), this protein is Anti-sigma F factor.